Consider the following 387-residue polypeptide: Small ribosomal subunit protein uS5m (387 aa).

The N-terminal 22 residues, Met1–Cys22, are a transit peptide targeting the mitochondrion. Positions Phe33–Lys87 are disordered. Residues Lys48–Glu60 show a composition bias toward basic and acidic residues. Phosphoserine is present on Ser85. The S5 DRBM domain maps to Leu225–Ile288.

It belongs to the universal ribosomal protein uS5 family. Component of the mitochondrial small ribosomal subunit (mt-SSU). Mature yeast 74S mitochondrial ribosomes consist of a small (37S) and a large (54S) subunit. The 37S small subunit contains a 15S ribosomal RNA (15S mt-rRNA) and at least 32 different proteins. The 54S large subunit contains a 21S rRNA (21S mt-rRNA) and at least 45 different proteins. uS3m, uS4m and uS5m form the narrow entry site of the mRNA channel.

Its subcellular location is the mitochondrion. Functionally, component of the mitochondrial ribosome (mitoribosome), a dedicated translation machinery responsible for the synthesis of mitochondrial genome-encoded proteins, including at least some of the essential transmembrane subunits of the mitochondrial respiratory chain. The mitoribosomes are attached to the mitochondrial inner membrane and translation products are cotranslationally integrated into the membrane. The protein is Small ribosomal subunit protein uS5m (mrp5) of Schizosaccharomyces pombe (strain 972 / ATCC 24843) (Fission yeast).